Here is a 41-residue protein sequence, read N- to C-terminus: Large ribosomal subunit protein bL36 (41 aa).

The protein belongs to the bacterial ribosomal protein bL36 family.

The polypeptide is Large ribosomal subunit protein bL36 (Xylella fastidiosa (strain 9a5c)).